Here is a 207-residue protein sequence, read N- to C-terminus: Strobilurin A biosynthesis cluster protein r1 (207 aa).

Transmembrane regions (helical) follow at residues Phe-108–Leu-128 and Asn-169–Ile-189.

It is found in the membrane. The protein operates within mycotoxin biosynthesis. Its function is as follows. Part of the gene cluster that mediates the biosynthesis of strobilurin A, an antifungal polyketide that contains a key beta-methoxyacrylate toxophore that targets the complex III of the mitochondrial electron transport chain. Strobilurin biosynthesis begins with construction of benzoyl CoA by step-wise elimination of ammonia from phenylalanine by the phenylalanine ammonia-lyase str11, oxygenation by str8 and retro-Claisen reaction to form benzoic acid, which is activated to its CoA thiolester benzoyl CoA by the dedicated CoA ligase str10. Benzoyl CoA forms the starter unit for the highly reducing polyketide synthase stpks1 that produces the polyketide prestrobilutin A. The FAD-dependent oxygenase str9 then catalyzes the key oxidative rearrangement responsible for the creation of the beta-methoxyacrylate toxophore. Str9 performs epoxidation of the 2,3 olefin of prestrobilutin A, followed by Meinwald rearrangement to furnish the aldehyde intermediate. Rapid enolization of the aldehyde intermediate would give the beta-methoxyacrylate skeleton and methylations catalyzed by str2 and str3 complete the synthesis and lead to the production of strobilurin A. The short-chain dehydrogenase stl2 and the dehydrogenase str4 play a role in the shunt pathway leading to the production of bolineol. The cluster encodes no obvious halogenase gene that could be involved in production of strobilurin B, nor any obvious dimethylallyl-transferase that could be involved in the production of strobilurin G. It is possible that unknown proteins encoded in, or near, the cluster (such as str1 or stl1) may form new classes of halogenases or dimethylally-transferases, or that the responsible genes are located elsewhere on the genome. Similarly, proteins encoded by str5/str6 hydrolases appear to have no chemical role in the biosynthesis of strobilurin A. Finally, no obvious self-resistance gene is found within the cluster. The chain is Strobilurin A biosynthesis cluster protein r1 from Strobilurus tenacellus.